A 339-amino-acid polypeptide reads, in one-letter code: 5-dehydro-2-deoxygluconokinase (339 aa).

This sequence belongs to the carbohydrate kinase PfkB family.

The enzyme catalyses 5-dehydro-2-deoxy-D-gluconate + ATP = 6-phospho-5-dehydro-2-deoxy-D-gluconate + ADP + H(+). It functions in the pathway polyol metabolism; myo-inositol degradation into acetyl-CoA; acetyl-CoA from myo-inositol: step 5/7. Catalyzes the phosphorylation of 5-dehydro-2-deoxy-D-gluconate (2-deoxy-5-keto-D-gluconate or DKG) to 6-phospho-5-dehydro-2-deoxy-D-gluconate (DKGP). This chain is 5-dehydro-2-deoxygluconokinase, found in Clostridium beijerinckii (strain ATCC 51743 / NCIMB 8052) (Clostridium acetobutylicum).